The chain runs to 408 residues: CinA-like protein (408 aa).

Belongs to the CinA family.

The chain is CinA-like protein from Thermotoga maritima (strain ATCC 43589 / DSM 3109 / JCM 10099 / NBRC 100826 / MSB8).